A 302-amino-acid polypeptide reads, in one-letter code: MPDLADLFPGFGSEWINTSSGRIFARVGGDGPPLLLLHGFPQTHVMWHRVAPKLAERFKVIVADLPGYGWSDMPESDEQHTPYTKRAMAKQLIEAMEQLGHVHFALAGHDRGARVSYRLALDSPGRLSKLAVLDILPTYEYWQRMNRAYALKIYHWSFLAQPAPLPENLLGGDPDFYVKAKLASWTRAGDLSAFDPRAVEHYRIAFADPMRRHVMCEDYRAGAYADFEHDKIDVEAGNKIPVPMLALWGASGIAQSAATPLDVWRKWASDVQGAPIESGHFLPEEAPDQTAEALVRFFSAAP.

The region spanning 32–270 is the AB hydrolase-1 domain; the sequence is PPLLLLHGFP…LDVWRKWASD (239 aa). The active-site Nucleophile is aspartate 110. Fluoroacetate is bound by residues arginine 111, arginine 114, histidine 155, tryptophan 156, and tyrosine 219. Histidine 280 (proton acceptor) is an active-site residue.

This sequence belongs to the AB hydrolase superfamily. Epoxide hydrolase family. Homodimer.

It catalyses the reaction a haloacetate + H2O = a halide anion + glycolate + H(+). The catalysed reaction is fluoroacetate + H2O = fluoride + glycolate + H(+). The enzyme catalyses chloroacetate + H2O = glycolate + chloride + H(+). Functionally, catalyzes the hydrolytic defluorination of fluoroacetate to produce glycolate. Has lower activity towards chloroacetate and bromoacetate. The chain is Fluoroacetate dehalogenase from Rhodopseudomonas palustris (strain ATCC BAA-98 / CGA009).